The following is a 282-amino-acid chain: Large ribosomal subunit protein uL4c (282 aa).

The N-terminal 43 residues, 1–43 (MAASLSFFSSSIFLSNPNIQSSKHLLFRSPKQLSVAAIATIRS), are a transit peptide targeting the chloroplast. 2 disordered regions span residues 86–133 (RNQR…GGVV) and 251–282 (RYGD…ESSE). Positions 255–282 (ENEWEDEEEDDQEDNDGGEAEESTESSE) are enriched in acidic residues.

It belongs to the universal ribosomal protein uL4 family. In terms of assembly, part of the 50S ribosomal subunit.

It is found in the plastid. The protein resides in the chloroplast. Functionally, this protein binds directly and specifically to 23S rRNA. May play a role in plastid transcriptional regulation. This Nicotiana tabacum (Common tobacco) protein is Large ribosomal subunit protein uL4c (RPL4).